We begin with the raw amino-acid sequence, 885 residues long: Translation initiation factor IF-2 (885 aa).

Disordered stretches follow at residues 135-159 and 184-289; these read KAKAEAEAKAKAEAEAKAKAKAAAE and QAEA…PESM. Residues 184-232 show a composition bias toward basic and acidic residues; that stretch reads QAEATKRKQDEEAAKAAEKARLLAEENSKRWAEEERQRLEAERYSDHHI. Residues 253-266 show a composition bias toward basic residues; sequence GRRARNKNTAKSKR. Basic and acidic residues predominate over residues 267 to 276; that stretch reads GGKDARDGRE. The tr-type G domain occupies 385-554; the sequence is PRAPVVTIMG…LLQAEVLELK (170 aa). Residues 394–401 are G1; the sequence is GHVDHGKT. A GTP-binding site is contributed by 394 to 401; that stretch reads GHVDHGKT. The tract at residues 419 to 423 is G2; the sequence is GITQH. Residues 440–443 are G3; it reads DTPG. GTP is bound by residues 440 to 444 and 494 to 497; these read DTPGH and NKMD. The tract at residues 494–497 is G4; the sequence is NKMD. A G5 region spans residues 530-532; it reads SAK.

Belongs to the TRAFAC class translation factor GTPase superfamily. Classic translation factor GTPase family. IF-2 subfamily.

The protein localises to the cytoplasm. Functionally, one of the essential components for the initiation of protein synthesis. Protects formylmethionyl-tRNA from spontaneous hydrolysis and promotes its binding to the 30S ribosomal subunits. Also involved in the hydrolysis of GTP during the formation of the 70S ribosomal complex. This chain is Translation initiation factor IF-2, found in Shewanella sp. (strain MR-7).